An 831-amino-acid chain; its full sequence is Heat shock 70 kDa protein 14 (831 aa).

2 disordered regions span residues 503–579 and 786–831; these read EEVE…KKKV and TKPK…EGST. Basic and acidic residues predominate over residues 509–526; the sequence is VTKEHSEETTKMDSDKAS. Residue S533 is modified to Phosphoserine.

The protein belongs to the heat shock protein 70 (TC 1.A.33) family. HSP110/SSE subfamily. As to quaternary structure, interacts with HTT1 in both cytoplasm and nucleus. As to expression, constitutively expressed.

The protein resides in the cytoplasm. It is found in the nucleus. Functionally, in cooperation with other chaperones, Hsp70s are key components that facilitate folding of de novo synthesized proteins, assist translocation of precursor proteins into organelles, and are responsible for degradation of damaged protein under stress conditions. This is Heat shock 70 kDa protein 14 (HSP70-14) from Arabidopsis thaliana (Mouse-ear cress).